The sequence spans 524 residues: Indoleacetamide hydrolase (524 aa).

2 stretches are compositionally biased toward basic residues: residues methionine 1–alanine 26 and alanine 34–lysine 54. The segment at methionine 1–proline 56 is disordered. Residues lysine 133 and serine 208 each act as charge relay system in the active site. The Acyl-ester intermediate role is filled by serine 232.

It belongs to the amidase family.

The protein operates within plant hormone metabolism; auxin biosynthesis. Functionally, hydrolyzes indole-3-acetamide (IAM) into indole-3-acetic acid (IAA). This chain is Indoleacetamide hydrolase (bam), found in Bradyrhizobium diazoefficiens (strain JCM 10833 / BCRC 13528 / IAM 13628 / NBRC 14792 / USDA 110).